A 391-amino-acid chain; its full sequence is Phosphopentomutase (391 aa).

D14 is a Mn(2+) binding site. The tract at residues 61–88 is disordered; the sequence is IQGVPPDPAPTAFHGRMAERSEGKDTTT. Positions 76–87 are enriched in basic and acidic residues; the sequence is RMAERSEGKDTT. Mn(2+) contacts are provided by D286, H291, D327, H328, and H339.

The protein belongs to the phosphopentomutase family. Mn(2+) serves as cofactor.

Its subcellular location is the cytoplasm. The enzyme catalyses 2-deoxy-alpha-D-ribose 1-phosphate = 2-deoxy-D-ribose 5-phosphate. It catalyses the reaction alpha-D-ribose 1-phosphate = D-ribose 5-phosphate. The protein operates within carbohydrate degradation; 2-deoxy-D-ribose 1-phosphate degradation; D-glyceraldehyde 3-phosphate and acetaldehyde from 2-deoxy-alpha-D-ribose 1-phosphate: step 1/2. Its function is as follows. Isomerase that catalyzes the conversion of deoxy-ribose 1-phosphate (dRib-1-P) and ribose 1-phosphate (Rib-1-P) to deoxy-ribose 5-phosphate (dRib-5-P) and ribose 5-phosphate (Rib-5-P), respectively. The chain is Phosphopentomutase from Anaeromyxobacter dehalogenans (strain 2CP-C).